A 148-amino-acid polypeptide reads, in one-letter code: Ubiquitin-conjugating enzyme E2 30 (148 aa).

A UBC core domain is found at 1–147 (MASKRINKEL…AQSWTQKYAM (147 aa)). Cysteine 85 functions as the Glycyl thioester intermediate in the catalytic mechanism.

Belongs to the ubiquitin-conjugating enzyme family. Interacts with RGLG3 and RGLG4. As to expression, ubiquitously expressed at very low levels.

It catalyses the reaction S-ubiquitinyl-[E1 ubiquitin-activating enzyme]-L-cysteine + [E2 ubiquitin-conjugating enzyme]-L-cysteine = [E1 ubiquitin-activating enzyme]-L-cysteine + S-ubiquitinyl-[E2 ubiquitin-conjugating enzyme]-L-cysteine.. Its pathway is protein modification; protein ubiquitination. Its function is as follows. Accepts the ubiquitin from the E1 complex and catalyzes its covalent attachment to other proteins. The protein is Ubiquitin-conjugating enzyme E2 30 (UBC30) of Arabidopsis thaliana (Mouse-ear cress).